The sequence spans 140 residues: Protein BIC1 (140 aa).

The span at 1-10 (MMNIDDTTSP) shows a compositional bias: polar residues. The tract at residues 1–71 (MMNIDDTTSP…RVDTGRERLK (71 aa)) is disordered. Positions 42-68 (ADKKDLALLEEKPKQSQEEDRVDTGRE) are enriched in basic and acidic residues.

As to quaternary structure, interacts with CRY2 in both darkness and light.

The protein localises to the nucleus. Its function is as follows. Regulates the blue-light dependent dimerization of CRY2 and formation of photobodies. Interacts with photoexited CRY2 to inhibit its activity. Inhibits CRY phosphorylation. This is Protein BIC1 from Arabidopsis thaliana (Mouse-ear cress).